We begin with the raw amino-acid sequence, 200 residues long: MSFSPLIRQLIDALRTLPGVGQKTAQRMALQLLERDRSGGTRLAQALSQAMEGVGHCRQCRTLTEDDLCPQCADTRRDDTLLCVVEGPMDVYAVEQTGFRGRYFVLKGHLSPLDGLGPEAIGIPQLMARIEEAGTFTEVILATNPTVEGEATAHYIAQLLQNKGLIASRIAHGVPLGGELELVDGGTLAHSFAGRKPISL.

A C4-type zinc finger spans residues 57-72 (CRQCRTLTEDDLCPQC). One can recognise a Toprim domain in the interval 80-175 (TLLCVVEGPM…IASRIAHGVP (96 aa)).

Belongs to the RecR family.

In terms of biological role, may play a role in DNA repair. It seems to be involved in an RecBC-independent recombinational process of DNA repair. It may act with RecF and RecO. In Pseudomonas fluorescens (strain Pf0-1), this protein is Recombination protein RecR.